Reading from the N-terminus, the 76-residue chain is Small ribosomal subunit protein bS18 (76 aa).

The protein belongs to the bacterial ribosomal protein bS18 family. Part of the 30S ribosomal subunit. Forms a tight heterodimer with protein bS6.

Functionally, binds as a heterodimer with protein bS6 to the central domain of the 16S rRNA, where it helps stabilize the platform of the 30S subunit. This Azotobacter vinelandii (strain DJ / ATCC BAA-1303) protein is Small ribosomal subunit protein bS18.